Consider the following 335-residue polypeptide: Aspartate carbamoyltransferase catalytic subunit (335 aa).

Residues Arg81 and Thr82 each coordinate carbamoyl phosphate. Lys109 serves as a coordination point for L-aspartate. Residues Arg131, His159, and Gln162 each coordinate carbamoyl phosphate. 2 residues coordinate L-aspartate: Arg192 and Arg246. Residues Gly287 and Pro288 each coordinate carbamoyl phosphate.

The protein belongs to the aspartate/ornithine carbamoyltransferase superfamily. ATCase family. In terms of assembly, heterododecamer (2C3:3R2) of six catalytic PyrB chains organized as two trimers (C3), and six regulatory PyrI chains organized as three dimers (R2).

The enzyme catalyses carbamoyl phosphate + L-aspartate = N-carbamoyl-L-aspartate + phosphate + H(+). It participates in pyrimidine metabolism; UMP biosynthesis via de novo pathway; (S)-dihydroorotate from bicarbonate: step 2/3. In terms of biological role, catalyzes the condensation of carbamoyl phosphate and aspartate to form carbamoyl aspartate and inorganic phosphate, the committed step in the de novo pyrimidine nucleotide biosynthesis pathway. This Caulobacter sp. (strain K31) protein is Aspartate carbamoyltransferase catalytic subunit.